A 154-amino-acid polypeptide reads, in one-letter code: Protein LOL1 (154 aa).

3 putative zinc finger regions span residues 34 to 64, 73 to 103, and 111 to 141; these read QLVC…VTAV, QLVC…VNLA, and HVNC…VTSV.

Its subcellular location is the nucleus. Its function is as follows. Positive regulator of reactive oxygen-induced cell death. May be involved in the repression of the copper/zinc superoxide dismutase CSD1 and CSD2 that detoxify accumulating superoxide before the reactive oxygen species (ROS) can trigger a cell death cascade. LSD1 and LOL1 have antagonistic effects on CSD1 and CSD2 accumulation to regulate oxidative stress-induced cell death. In Arabidopsis thaliana (Mouse-ear cress), this protein is Protein LOL1 (LOL1).